A 453-amino-acid chain; its full sequence is tRNA-2-methylthio-N(6)-dimethylallyladenosine synthase (453 aa).

Positions 7-123 (GTYWITTFGC…LDTLLSQVEA (117 aa)) constitute an MTTase N-terminal domain. 6 residues coordinate [4Fe-4S] cluster: Cys16, Cys52, Cys86, Cys158, Cys162, and Cys165. In terms of domain architecture, Radical SAM core spans 144–381 (RDSSLCAWVN…NALVERKAKA (238 aa)). A TRAM domain is found at 384-447 (QRYLGRVEEV…AFSLSGSAQA (64 aa)).

This sequence belongs to the methylthiotransferase family. MiaB subfamily. Monomer. Requires [4Fe-4S] cluster as cofactor.

The protein localises to the cytoplasm. The catalysed reaction is N(6)-dimethylallyladenosine(37) in tRNA + (sulfur carrier)-SH + AH2 + 2 S-adenosyl-L-methionine = 2-methylsulfanyl-N(6)-dimethylallyladenosine(37) in tRNA + (sulfur carrier)-H + 5'-deoxyadenosine + L-methionine + A + S-adenosyl-L-homocysteine + 2 H(+). In terms of biological role, catalyzes the methylthiolation of N6-(dimethylallyl)adenosine (i(6)A), leading to the formation of 2-methylthio-N6-(dimethylallyl)adenosine (ms(2)i(6)A) at position 37 in tRNAs that read codons beginning with uridine. In Synechococcus sp. (strain RCC307), this protein is tRNA-2-methylthio-N(6)-dimethylallyladenosine synthase.